Here is a 229-residue protein sequence, read N- to C-terminus: MAEEMESSLEASFSSSGAVSGASGFLPPARSRIFKIIVIGDSNVGKTCLTYRFCAGRFPDRTEATIGVDFRERAVEIDGERIKIQLWDTAGQERFRKSMVQHYYRNVHAVVFVYDMTNMASFHSLPSWIEECKQHLLASDIPRILVGNKCDLRSAIQVPTDLAQKFADTHSMPLFETSAKNPNDNDHVEAIFMTLAHKLKSHKPLMLSQPPDNGIILKPEPKPAMTCWC.

N43, V44, G45, K46, T47, C48, T62, and T65 together coordinate GTP. Mg(2+) is bound at residue T47. A Switch 1 motif is present at residues 56-68; that stretch reads GRFPDRTEATIGV. Residues T65 and D88 each contribute to the Mg(2+) site. Residues 89-108 carry the Switch 2 motif; that stretch reads TAGQERFRKSMVQHYYRNVH. The GTP site is built by G91, N148, K149, D151, A179, and K180. Residues C227 and C229 are each lipidated (S-geranylgeranyl cysteine). A Cysteine methyl ester modification is found at C229.

Belongs to the small GTPase superfamily. Rab family. As to quaternary structure, interacts (GTP- and GDP-bound forms) with ATG16L1; the complex consists of a tetramer where two RAB33B molecules bind independently one molecule of the ATG16L1 homodimer; the interaction promotes ATG12-ATG5-ATG16L1 complex recruitment to phagophores. Interacts with ATG16L2; however interaction is approximately hundred times lower than for ATG16L1. Interacts with RIC1 (via C-terminus domain); the interaction is direct with a preference for RAB33B-GTP. Interacts with RGP1. Mg(2+) serves as cofactor. Prenylated.

It is found in the golgi apparatus membrane. Its subcellular location is the golgi apparatus. The protein localises to the cis-Golgi network. The protein resides in the preautophagosomal structure membrane. The catalysed reaction is GTP + H2O = GDP + phosphate + H(+). Its activity is regulated as follows. Regulated by guanine nucleotide exchange factors (GEFs) which promote the exchange of bound GDP for free GTP. Regulated by GTPase activating proteins (GAPs) such as SGSM2 which increase the GTP hydrolysis activity. Inhibited by GDP dissociation inhibitors (GDIs). The small GTPases Rab are key regulators of intracellular membrane trafficking, from the formation of transport vesicles to their fusion with membranes. Rabs cycle between an inactive GDP-bound form and an active GTP-bound form that is able to recruit to membranes different sets of downstream effectors directly responsible for vesicle formation, movement, tethering and fusion. RAB33B acts, in coordination with RAB6A, to regulate intra-Golgi retrograde trafficking. Participates in autophagosome formation by recruiting the ATG12-ATG5-ATG16L1 complex to phagophores, probably in a nucleotide-independent manner. The protein is Ras-related protein Rab-33B (RAB33B) of Pongo abelii (Sumatran orangutan).